The chain runs to 335 residues: Taste receptor type 2 member 119 (335 aa).

Residues 1 to 7 (MMEGHIL) are Extracellular-facing. The chain crosses the membrane as a helical span at residues 8–28 (FFFLVVMVQFVTGVLANGLIV). At 29-43 (VVHAIDLIMWKKMAP) the chain is on the cytoplasmic side. Residues 44-64 (LDLLLFCLATSRIILQLCILF) form a helical membrane-spanning segment. Residues 65-81 (AQLCLFSLVRHTLFEDN) are Extracellular-facing. Asn81 is a glycosylation site (N-linked (GlcNAc...) asparagine). A helical membrane pass occupies residues 82 to 102 (ITFVFIINELSLWFATWLGVF). Over 103–124 (YCAKIATIPHPLFLWLKMRISR) the chain is Cytoplasmic. The helical transmembrane segment at 125 to 145 (LVPWLILGSVLYVIITTFIHS) threads the bilayer. The Extracellular portion of the chain corresponds to 146–176 (RETSAILKPIFISLFPKNATQVGTGHATLLS). The N-linked (GlcNAc...) asparagine glycan is linked to Asn163. The helical transmembrane segment at 177 to 197 (VLVLGLTLPLFIFTVAVLLLI) threads the bilayer. Residues 198 to 224 (YSLWNYSRQMRTMVGTREYSGHAHISA) are Cytoplasmic-facing. A helical membrane pass occupies residues 225–245 (MLSILSFLILYLSHYMVAVLI). Residues 246–256 (STQVLYLGSRT) are Extracellular-facing. A helical transmembrane segment spans residues 257-277 (FVFCLLVIGMYPSIHSIVLIL). Residues 278 to 335 (GNPKLKRNAKMFIVHCKCCHCTRAWVTSRSPRLSDLPVPPTHPSANKTSCSEACIMPS) lie on the Cytoplasmic side of the membrane. The tract at residues 308–327 (PRLSDLPVPPTHPSANKTSC) is disordered.

The protein belongs to the G-protein coupled receptor T2R family. Expressed in subsets of taste receptor cells of the tongue and palate epithelium and exclusively in gustducin-positive cells. Expressed in the duodenum, antrum and fundus (part of the stomach).

The protein resides in the membrane. Functionally, gustducin-coupled receptor implicated in the perception of bitter compounds in the oral cavity and the gastrointestinal tract. Signals through PLCB2 and the calcium-regulated cation channel TRPM5. The polypeptide is Taste receptor type 2 member 119 (Tas2r119) (Rattus norvegicus (Rat)).